The sequence spans 271 residues: Putative phosphoenolpyruvate synthase regulatory protein (271 aa).

Position 152–159 (152–159 (GVSRCGKT)) interacts with ADP.

The protein belongs to the pyruvate, phosphate/water dikinase regulatory protein family. PSRP subfamily.

The catalysed reaction is [pyruvate, water dikinase] + ADP = [pyruvate, water dikinase]-phosphate + AMP + H(+). It catalyses the reaction [pyruvate, water dikinase]-phosphate + phosphate + H(+) = [pyruvate, water dikinase] + diphosphate. In terms of biological role, bifunctional serine/threonine kinase and phosphorylase involved in the regulation of the phosphoenolpyruvate synthase (PEPS) by catalyzing its phosphorylation/dephosphorylation. This Legionella pneumophila (strain Lens) protein is Putative phosphoenolpyruvate synthase regulatory protein.